A 146-amino-acid polypeptide reads, in one-letter code: uncharacterized protein (146 aa).

Disordered regions lie at residues 1-33 (MATFHRAHATSSVKPRARRHQEPNSGDWPGSYR) and 50-70 (QHWRPRSLGAGQGREDPSWEG).

This is an uncharacterized protein from Homo sapiens (Human).